A 321-amino-acid chain; its full sequence is Beta-ketoacyl-[acyl-carrier-protein] synthase III (321 aa).

Residues Cys-114 and His-248 contribute to the active site. Residues 249–253 (QANKR) are ACP-binding. Asn-278 is a catalytic residue.

It belongs to the thiolase-like superfamily. FabH family. As to quaternary structure, homodimer.

The protein localises to the cytoplasm. The catalysed reaction is malonyl-[ACP] + acetyl-CoA + H(+) = 3-oxobutanoyl-[ACP] + CO2 + CoA. It participates in lipid metabolism; fatty acid biosynthesis. Its function is as follows. Catalyzes the condensation reaction of fatty acid synthesis by the addition to an acyl acceptor of two carbons from malonyl-ACP. Catalyzes the first condensation reaction which initiates fatty acid synthesis and may therefore play a role in governing the total rate of fatty acid production. Possesses both acetoacetyl-ACP synthase and acetyl transacylase activities. Its substrate specificity determines the biosynthesis of branched-chain and/or straight-chain of fatty acids. The chain is Beta-ketoacyl-[acyl-carrier-protein] synthase III from Sphingopyxis alaskensis (strain DSM 13593 / LMG 18877 / RB2256) (Sphingomonas alaskensis).